Consider the following 520-residue polypeptide: GMP synthase [glutamine-hydrolyzing] (520 aa).

One can recognise a Glutamine amidotransferase type-1 domain in the interval 3–200 (AIAIIDFGSQ…FLDIANCKRD (198 aa)). C84 acts as the Nucleophile in catalysis. Residues H175 and E177 contribute to the active site. One can recognise a GMPS ATP-PPase domain in the interval 201–386 (WTMKSIIEKQ…IGLSNEIIFQ (186 aa)). 228–234 (SGGVDSS) is a binding site for ATP.

In terms of assembly, homodimer.

It carries out the reaction XMP + L-glutamine + ATP + H2O = GMP + L-glutamate + AMP + diphosphate + 2 H(+). It participates in purine metabolism; GMP biosynthesis; GMP from XMP (L-Gln route): step 1/1. Its function is as follows. Catalyzes the synthesis of GMP from XMP. This chain is GMP synthase [glutamine-hydrolyzing], found in Wolbachia sp. subsp. Brugia malayi (strain TRS).